The following is a 900-amino-acid chain: Alanine--tRNA ligase (900 aa).

The Zn(2+) site is built by histidine 587, histidine 591, cysteine 691, and histidine 695.

The protein belongs to the class-II aminoacyl-tRNA synthetase family. The cofactor is Zn(2+).

It localises to the cytoplasm. It carries out the reaction tRNA(Ala) + L-alanine + ATP = L-alanyl-tRNA(Ala) + AMP + diphosphate. In terms of biological role, catalyzes the attachment of alanine to tRNA(Ala) in a two-step reaction: alanine is first activated by ATP to form Ala-AMP and then transferred to the acceptor end of tRNA(Ala). Also edits incorrectly charged Ser-tRNA(Ala) and Gly-tRNA(Ala) via its editing domain. This chain is Alanine--tRNA ligase, found in Aeropyrum pernix (strain ATCC 700893 / DSM 11879 / JCM 9820 / NBRC 100138 / K1).